A 206-amino-acid chain; its full sequence is Large ribosomal subunit protein uL4 (206 aa).

This sequence belongs to the universal ribosomal protein uL4 family. Part of the 50S ribosomal subunit.

Its function is as follows. One of the primary rRNA binding proteins, this protein initially binds near the 5'-end of the 23S rRNA. It is important during the early stages of 50S assembly. It makes multiple contacts with different domains of the 23S rRNA in the assembled 50S subunit and ribosome. Forms part of the polypeptide exit tunnel. This Rhodopseudomonas palustris (strain HaA2) protein is Large ribosomal subunit protein uL4.